Reading from the N-terminus, the 274-residue chain is 2,3,4,5-tetrahydropyridine-2,6-dicarboxylate N-succinyltransferase (274 aa).

Substrate-binding residues include R103 and D140.

This sequence belongs to the transferase hexapeptide repeat family. As to quaternary structure, homotrimer.

Its subcellular location is the cytoplasm. The enzyme catalyses (S)-2,3,4,5-tetrahydrodipicolinate + succinyl-CoA + H2O = (S)-2-succinylamino-6-oxoheptanedioate + CoA. Its pathway is amino-acid biosynthesis; L-lysine biosynthesis via DAP pathway; LL-2,6-diaminopimelate from (S)-tetrahydrodipicolinate (succinylase route): step 1/3. This chain is 2,3,4,5-tetrahydropyridine-2,6-dicarboxylate N-succinyltransferase, found in Actinobacillus pleuropneumoniae serotype 5b (strain L20).